Consider the following 154-residue polypeptide: MTDPAQNILDIRQILGLLPHRYPFLLVDRVTEYVPGEYIKGYKNVTMNEPFFEGHFPGVPVMPGVLIMEALAQAGGILVVKSTDTPVEDKLFLFTGIESVRFRKPVYPGDKLELHCRLLRHKLKLWKMEGFAYVDGKLAAEAVMTAAVTNREDM.

Histidine 55 is a catalytic residue.

It belongs to the thioester dehydratase family. FabZ subfamily.

The protein resides in the cytoplasm. It carries out the reaction a (3R)-hydroxyacyl-[ACP] = a (2E)-enoyl-[ACP] + H2O. Its function is as follows. Involved in unsaturated fatty acids biosynthesis. Catalyzes the dehydration of short chain beta-hydroxyacyl-ACPs and long chain saturated and unsaturated beta-hydroxyacyl-ACPs. This chain is 3-hydroxyacyl-[acyl-carrier-protein] dehydratase FabZ, found in Nitratidesulfovibrio vulgaris (strain DSM 19637 / Miyazaki F) (Desulfovibrio vulgaris).